The chain runs to 496 residues: Transcription termination factor MTERF9, chloroplastic (496 aa).

A chloroplast-targeting transit peptide spans 1–44; that stretch reads MAGFSLYCFKNPRILFTLPSESPLFVLGSDKCSPATRRPSRKTR. Disordered regions lie at residues 57–90 and 102–155; these read IINP…DDDW and YEKK…SWRL. Residues 74–90 show a composition bias toward acidic residues; it reads DSDEDDDDDDDDDDDDW. Residues 105–123 show a composition bias toward basic residues; sequence KKPKSHKQTIAKKSVKKGI. Residues 146 to 155 are compositionally biased toward basic and acidic residues; that stretch reads SEKKKESWRL.

Belongs to the mTERF family.

The protein localises to the plastid. Its subcellular location is the chloroplast. Its function is as follows. Transcription termination factor required for processing and steady-state levels of plastid transcripts. May play a role in response to abiotic stresses. The polypeptide is Transcription termination factor MTERF9, chloroplastic (Arabidopsis thaliana (Mouse-ear cress)).